A 558-amino-acid polypeptide reads, in one-letter code: AP2-like ethylene-responsive transcription factor AIL5 (558 aa).

Residues 1–54 show a composition bias toward low complexity; it reads MKNNNNKSSSSSSYDSSLSPSSSSSSHQNWLSFSLSNNNNNFNSSSNPNLTSST. 3 disordered regions span residues 1–65, 74–93, and 166–195; these read MKNN…PSHL, SPVE…ATAV, and HSSE…KNVE. DNA-binding regions (AP2/ERF) lie at residues 203 to 269 and 305 to 363; these read IYRG…TNFP and MYRG…TNFD. The segment at 387–406 is disordered; sequence SPATAAADKTVDLSPSDSPS.

This sequence belongs to the AP2/ERF transcription factor family. AP2 subfamily. Expressed in roots, seedlings, inflorescence, and siliques. Also detected at low levels in leaves.

It is found in the nucleus. Probably acts as a transcriptional activator. Binds to the GCC-box pathogenesis-related promoter element. May be involved in the regulation of gene expression by stress factors and by components of stress signal transduction pathways. Involved in the regulation of floral organs size. This Arabidopsis thaliana (Mouse-ear cress) protein is AP2-like ethylene-responsive transcription factor AIL5.